The primary structure comprises 194 residues: Holliday junction branch migration complex subunit RuvA (194 aa).

Positions 1-64 are domain I; sequence MIGRLRGILA…EDSVSLYGFL (64 aa). A domain II region spans residues 65–140; sequence REGERRLFRD…RAADFSSGAP (76 aa). The segment at 140 to 144 is flexible linker; it reads PITGQ. A domain III region spans residues 145 to 194; that stretch reads LGPDAVSEATVALQQLGYKPAEAARMARDAGAEGDEVATVIRKALQAALR.

It belongs to the RuvA family. As to quaternary structure, homotetramer. Forms an RuvA(8)-RuvB(12)-Holliday junction (HJ) complex. HJ DNA is sandwiched between 2 RuvA tetramers; dsDNA enters through RuvA and exits via RuvB. An RuvB hexamer assembles on each DNA strand where it exits the tetramer. Each RuvB hexamer is contacted by two RuvA subunits (via domain III) on 2 adjacent RuvB subunits; this complex drives branch migration. In the full resolvosome a probable DNA-RuvA(4)-RuvB(12)-RuvC(2) complex forms which resolves the HJ.

Its subcellular location is the cytoplasm. Functionally, the RuvA-RuvB-RuvC complex processes Holliday junction (HJ) DNA during genetic recombination and DNA repair, while the RuvA-RuvB complex plays an important role in the rescue of blocked DNA replication forks via replication fork reversal (RFR). RuvA specifically binds to HJ cruciform DNA, conferring on it an open structure. The RuvB hexamer acts as an ATP-dependent pump, pulling dsDNA into and through the RuvAB complex. HJ branch migration allows RuvC to scan DNA until it finds its consensus sequence, where it cleaves and resolves the cruciform DNA. In Xanthomonas axonopodis pv. citri (strain 306), this protein is Holliday junction branch migration complex subunit RuvA.